A 273-amino-acid polypeptide reads, in one-letter code: Torsin-1A (273 aa).

Positions 45–205 (KPKKPLTLSL…VSVFNNKNSG (161 aa)) are interaction with SNAPIN. 56–63 (GWTGTGKN) contacts ATP. 2 N-linked (GlcNAc...) asparagine glycosylation sites follow: asparagine 97 and asparagine 112.

This sequence belongs to the ClpA/ClpB family. Torsin subfamily. In terms of assembly, homohexamer. Interacts with TOR1B; the interaction may be specific of neural tissues. Interacts (ATP-bound) with TOR1AIP1 and TOR1AIP2; the interactions induce ATPase activity. Interacts with KLHL14; preferentially when ATP-free. Interacts with KLC1 (via TPR repeats); the interaction associates TOR1A with the kinesin oligomeric complex. Interacts with COPS4; the interaction associates TOR1A with the CSN complex. Interacts with SNAPIN; the interaction is direct and associates SNAPIN with the CSN complex. Interacts with STON2. Interacts (ATP-bound) with SYNE3 (via KASH domain); the interaction is required for SYNE3 nuclear envelope localization. Interacts with VIM; the interaction associates TOR1A with the cytoskeleton. Interacts with PLEC. Interacts (ATP-bound) with SLC6A3; regulates SLC6A3 transport to the plasma membrane. In terms of processing, N-glycosylated.

It localises to the endoplasmic reticulum lumen. Its subcellular location is the nucleus membrane. The protein resides in the cell projection. The protein localises to the growth cone. It is found in the cytoplasmic vesicle membrane. It localises to the synapse. Its subcellular location is the synaptosome. The protein resides in the cytoplasm. The protein localises to the cytoskeleton. The catalysed reaction is ATP + H2O = ADP + phosphate + H(+). Its function is as follows. Protein with chaperone functions important for the control of protein folding, processing, stability and localization as well as for the reduction of misfolded protein aggregates. Involved in the regulation of synaptic vesicle recycling, controls STON2 protein stability in collaboration with the COP9 signalosome complex (CSN). In the nucleus, may link the cytoskeleton with the nuclear envelope, this mechanism seems to be crucial for the control of nuclear polarity, cell movement and, specifically in neurons, nuclear envelope integrity. Participates in the cellular trafficking and may regulate the subcellular location of multipass membrane proteins such as the dopamine transporter SLC6A3, leading to the modulation of dopamine neurotransmission. In the endoplasmic reticulum, plays a role in the quality control of protein folding by increasing clearance of misfolded proteins such as SGCE variants or holding them in an intermediate state for proper refolding. May have a redundant function with TOR1B in non-neural tissues. In Cricetus cricetus (Black-bellied hamster), this protein is Torsin-1A (TOR1A).